Consider the following 436-residue polypeptide: Gamma-glutamyl phosphate reductase (436 aa).

The protein belongs to the gamma-glutamyl phosphate reductase family.

The protein localises to the cytoplasm. The enzyme catalyses L-glutamate 5-semialdehyde + phosphate + NADP(+) = L-glutamyl 5-phosphate + NADPH + H(+). The protein operates within amino-acid biosynthesis; L-proline biosynthesis; L-glutamate 5-semialdehyde from L-glutamate: step 2/2. Its function is as follows. Catalyzes the NADPH-dependent reduction of L-glutamate 5-phosphate into L-glutamate 5-semialdehyde and phosphate. The product spontaneously undergoes cyclization to form 1-pyrroline-5-carboxylate. The chain is Gamma-glutamyl phosphate reductase from Prochlorococcus marinus (strain MIT 9215).